Consider the following 369-residue polypeptide: Biotin synthase (369 aa).

The 219-residue stretch at Asn-51–Lys-269 folds into the Radical SAM core domain. [4Fe-4S] cluster is bound by residues Cys-66, Cys-70, and Cys-73. Residues Cys-110, Cys-141, Cys-201, and Arg-273 each contribute to the [2Fe-2S] cluster site.

It belongs to the radical SAM superfamily. Biotin synthase family. Homodimer. [4Fe-4S] cluster serves as cofactor. It depends on [2Fe-2S] cluster as a cofactor.

The catalysed reaction is (4R,5S)-dethiobiotin + (sulfur carrier)-SH + 2 reduced [2Fe-2S]-[ferredoxin] + 2 S-adenosyl-L-methionine = (sulfur carrier)-H + biotin + 2 5'-deoxyadenosine + 2 L-methionine + 2 oxidized [2Fe-2S]-[ferredoxin]. It participates in cofactor biosynthesis; biotin biosynthesis; biotin from 7,8-diaminononanoate: step 2/2. Its function is as follows. Catalyzes the conversion of dethiobiotin (DTB) to biotin by the insertion of a sulfur atom into dethiobiotin via a radical-based mechanism. The protein is Biotin synthase of Pseudoalteromonas atlantica (strain T6c / ATCC BAA-1087).